Consider the following 318-residue polypeptide: MKPLNIIFAGTPDFAARHLQALLNSHHNVIGVYTQPDRPAGRGKKLTASPVKELAVANNIPVYQPGSLRKEPAQQELAALNADIMVVVAYGLILPKVVLDTPRLGCINVHGSILPRWRGAAPIQRALWAGDKETGVTVMQMDVGLDTGDMLLKTTLPIEDSDTSASLYEKLAEQGPVALLQALEGLANGTLAAEKQDEALANYAEKLSKEEARLDWNKSAQQLWQEVRAFNPWPVSYFEHQGNTIKVWQTQVSETTSTAAPGTIISASKKGIEVATADGVLTLLNMQLPGKKPLNVADILNARGEWFSPNTRLANEAQ.

Residue 112–115 coordinates (6S)-5,6,7,8-tetrahydrofolate; sequence SILP.

Belongs to the Fmt family.

The catalysed reaction is L-methionyl-tRNA(fMet) + (6R)-10-formyltetrahydrofolate = N-formyl-L-methionyl-tRNA(fMet) + (6S)-5,6,7,8-tetrahydrofolate + H(+). Its function is as follows. Attaches a formyl group to the free amino group of methionyl-tRNA(fMet). The formyl group appears to play a dual role in the initiator identity of N-formylmethionyl-tRNA by promoting its recognition by IF2 and preventing the misappropriation of this tRNA by the elongation apparatus. This is Methionyl-tRNA formyltransferase from Shewanella baltica (strain OS155 / ATCC BAA-1091).